A 743-amino-acid polypeptide reads, in one-letter code: Myb-related protein B (743 aa).

The interval 1–29 is disordered; sequence MSRRSRGDDLEDLQYQDTDSDVPEPKENR. A compositionally biased stretch (acidic residues) spans 9-22; the sequence is DLEDLQYQDTDSDV. HTH myb-type domains lie at 26–77, 78–133, and 134–184; these read KENR…LRVL, HPDL…NPEV, and KKSS…KRKV. DNA-binding regions (H-T-H motif) lie at residues 54–77, 106–129, and 157–180; these read WKTI…LRVL, WTLI…HNHL, and WAEI…NSTI. Disordered stretches follow at residues 221 to 262 and 381 to 406; these read VERS…SESA and VTEN…TPVK.

As to quaternary structure, component of the DREAM complex.

The protein resides in the nucleus. This chain is Myb-related protein B (mybl2), found in Xenopus laevis (African clawed frog).